We begin with the raw amino-acid sequence, 59 residues long: MAVPKRKTSPSKRGMRRSADALKAPTYVEDKNSGELRRPHHIDLKSGMYRGRQVLEAKE.

The segment covering 1–16 (MAVPKRKTSPSKRGMR) has biased composition (basic residues). Residues 1 to 59 (MAVPKRKTSPSKRGMRRSADALKAPTYVEDKNSGELRRPHHIDLKSGMYRGRQVLEAKE) form a disordered region. Residues 28 to 44 (VEDKNSGELRRPHHIDL) show a composition bias toward basic and acidic residues.

Belongs to the bacterial ribosomal protein bL32 family.

This Brucella anthropi (strain ATCC 49188 / DSM 6882 / CCUG 24695 / JCM 21032 / LMG 3331 / NBRC 15819 / NCTC 12168 / Alc 37) (Ochrobactrum anthropi) protein is Large ribosomal subunit protein bL32.